The sequence spans 530 residues: Autoinducer-2 kinase (530 aa).

The protein belongs to the FGGY kinase family.

It localises to the cytoplasm. It catalyses the reaction (S)-4,5-dihydroxypentane-2,3-dione + ATP = (2S)-2-hydroxy-3,4-dioxopentyl phosphate + ADP + H(+). Catalyzes the phosphorylation of autoinducer-2 (AI-2) to phospho-AI-2, which subsequently inactivates the transcriptional regulator LsrR and leads to the transcription of the lsr operon. Phosphorylates the ring-open form of (S)-4,5-dihydroxypentane-2,3-dione (DPD), which is the precursor to all AI-2 signaling molecules, at the C5 position. The polypeptide is Autoinducer-2 kinase (Salmonella paratyphi B (strain ATCC BAA-1250 / SPB7)).